A 714-amino-acid chain; its full sequence is Fatty acid oxidation complex subunit alpha (714 aa).

The enoyl-CoA hydratase stretch occupies residues M1–P190. The interval A306–Q714 is 3-hydroxyacyl-CoA dehydrogenase.

In the N-terminal section; belongs to the enoyl-CoA hydratase/isomerase family. The protein in the central section; belongs to the 3-hydroxyacyl-CoA dehydrogenase family. Heterotetramer of two alpha chains (FadJ) and two beta chains (FadI).

It is found in the cytoplasm. The enzyme catalyses a (3S)-3-hydroxyacyl-CoA = a (2E)-enoyl-CoA + H2O. It catalyses the reaction a 4-saturated-(3S)-3-hydroxyacyl-CoA = a (3E)-enoyl-CoA + H2O. It carries out the reaction a (3S)-3-hydroxyacyl-CoA + NAD(+) = a 3-oxoacyl-CoA + NADH + H(+). The catalysed reaction is (3S)-3-hydroxybutanoyl-CoA = (3R)-3-hydroxybutanoyl-CoA. It functions in the pathway lipid metabolism; fatty acid beta-oxidation. In terms of biological role, catalyzes the formation of a hydroxyacyl-CoA by addition of water on enoyl-CoA. Also exhibits 3-hydroxyacyl-CoA epimerase and 3-hydroxyacyl-CoA dehydrogenase activities. This chain is Fatty acid oxidation complex subunit alpha, found in Escherichia coli O9:H4 (strain HS).